The primary structure comprises 189 residues: Selenoprotein S (189 aa).

The helical transmembrane segment at 28–48 (SLLATYGWYIVFSCILLYVVF) threads the bilayer. The VCP/p97-interacting motif (VIM) stretch occupies residues 78 to 90 (RQEALAAARLKMQ). The interval 115 to 189 (KIEMWDSMQE…RRGPSSGGUG (75 aa)) is disordered. Phosphoserine is present on Ser140. The segment covering 159–173 (RGGGYNPLSGEGGGA) has biased composition (gly residues). Position 188 (Sec188) is a non-standard amino acid, selenocysteine.

It belongs to the selenoprotein S family. As to quaternary structure, interacts with DERL1 and (via VIM motif) with VCP, suggesting that it forms a membrane complex with DERL1 that serves as a receptor for VCP. Also interacts with DERL2, DERL3 and SELENOK. The SELENOK-SELENOS complex interacts with VCP. Interacts with CCDC47. Truncated SELENOS proteins produced by failed UGA/Sec decoding are ubiquitinated by the CRL2(KLHDC2) and CRL2(KLHDC3) complexes, which recognizes the glycine (Gly) at the C-terminus of truncated SELENOS proteins. Truncated SELENOS proteins produced by failed UGA/Sec decoding are also ubiquitinated by the CRL5(KLHDC1) complex.

It localises to the endoplasmic reticulum membrane. It is found in the cytoplasm. Involved in the degradation process of misfolded endoplasmic reticulum (ER) luminal proteins. Participates in the transfer of misfolded proteins from the ER to the cytosol, where they are destroyed by the proteasome in a ubiquitin-dependent manner. Probably acts by serving as a linker between DERL1, which mediates the retrotranslocation of misfolded proteins into the cytosol, and the ATPase complex VCP, which mediates the translocation and ubiquitination. This Homo sapiens (Human) protein is Selenoprotein S.